The chain runs to 227 residues: Cytochrome c oxidase subunit 2 (227 aa).

Topologically, residues 1–14 (MAYPFQLGFQDASS) are mitochondrial intermembrane. The helical transmembrane segment at 15–45 (PIMEELLHFHDHTLMIVFLISSLVLYIISLM) threads the bilayer. Residues 46-59 (LTTKLTHTSTMDAQ) lie on the Mitochondrial matrix side of the membrane. Residues 60 to 87 (EVETIWTILPAIILILIALPSLRILYMM) traverse the membrane as a helical segment. At 88–227 (DEINNPSLTV…HFENWSLSMI (140 aa)) the chain is on the mitochondrial intermembrane side. Cu cation is bound by residues His-161, Cys-196, Glu-198, Cys-200, His-204, and Met-207. Glu-198 contacts Mg(2+).

The protein belongs to the cytochrome c oxidase subunit 2 family. As to quaternary structure, component of the cytochrome c oxidase (complex IV, CIV), a multisubunit enzyme composed of 14 subunits. The complex is composed of a catalytic core of 3 subunits MT-CO1, MT-CO2 and MT-CO3, encoded in the mitochondrial DNA, and 11 supernumerary subunits COX4I, COX5A, COX5B, COX6A, COX6B, COX6C, COX7A, COX7B, COX7C, COX8 and NDUFA4, which are encoded in the nuclear genome. The complex exists as a monomer or a dimer and forms supercomplexes (SCs) in the inner mitochondrial membrane with NADH-ubiquinone oxidoreductase (complex I, CI) and ubiquinol-cytochrome c oxidoreductase (cytochrome b-c1 complex, complex III, CIII), resulting in different assemblies (supercomplex SCI(1)III(2)IV(1) and megacomplex MCI(2)III(2)IV(2)). Found in a complex with TMEM177, COA6, COX18, COX20, SCO1 and SCO2. Interacts with TMEM177 in a COX20-dependent manner. Interacts with COX20. Interacts with COX16. It depends on Cu cation as a cofactor.

The protein localises to the mitochondrion inner membrane. The catalysed reaction is 4 Fe(II)-[cytochrome c] + O2 + 8 H(+)(in) = 4 Fe(III)-[cytochrome c] + 2 H2O + 4 H(+)(out). Its function is as follows. Component of the cytochrome c oxidase, the last enzyme in the mitochondrial electron transport chain which drives oxidative phosphorylation. The respiratory chain contains 3 multisubunit complexes succinate dehydrogenase (complex II, CII), ubiquinol-cytochrome c oxidoreductase (cytochrome b-c1 complex, complex III, CIII) and cytochrome c oxidase (complex IV, CIV), that cooperate to transfer electrons derived from NADH and succinate to molecular oxygen, creating an electrochemical gradient over the inner membrane that drives transmembrane transport and the ATP synthase. Cytochrome c oxidase is the component of the respiratory chain that catalyzes the reduction of oxygen to water. Electrons originating from reduced cytochrome c in the intermembrane space (IMS) are transferred via the dinuclear copper A center (CU(A)) of subunit 2 and heme A of subunit 1 to the active site in subunit 1, a binuclear center (BNC) formed by heme A3 and copper B (CU(B)). The BNC reduces molecular oxygen to 2 water molecules using 4 electrons from cytochrome c in the IMS and 4 protons from the mitochondrial matrix. This is Cytochrome c oxidase subunit 2 (MT-CO2) from Oryctolagus cuniculus (Rabbit).